Reading from the N-terminus, the 243-residue chain is Vesicle-associated membrane protein-associated protein B (243 aa).

At alanine 2 the chain carries N-acetylalanine. Residues 2-218 (AKVEQVLSLE…AALAATGKEE (217 aa)) are Cytoplasmic-facing. The MSP domain occupies 7–124 (VLSLEPQHEL…MDSKLRCVFE (118 aa)). A Phosphoserine modification is found at serine 146. Residue lysine 147 forms a Glycyl lysine isopeptide (Lys-Gly) (interchain with G-Cter in SUMO1) linkage. Phosphoserine occurs at positions 156 and 159. The stretch at 161–196 (LDDTEVKKVMEECRRLQGEVQRLREESRQLKEEDGL) forms a coiled coil. Position 206 is a phosphoserine (serine 206). A helical; Anchor for type IV membrane protein transmembrane segment spans residues 219–239 (GLSARLLALVVLFFIVGVIIG).

This sequence belongs to the VAMP-associated protein (VAP) (TC 9.B.17) family. Homodimer, and heterodimer with VAPA. Interacts with VAMP1 and VAMP2. Interacts (via MSP domain) with ZFYVE27. Interacts with RMDN3. Interacts with KIF5A in a ZFYVE27-dependent manner. Interacts (via MSP domain) with STARD3 (via phospho-FFAT motif). Interacts with STARD3NL (via FFAT motif). Interacts with CERT1. Interacts with PLEKHA3 and SACM1L to form a ternary complex. Interacts with VPS13A (via FFAT motif). Interacts with RB1CC1 (via phosphorylated FFAT motif), MIGA2 (via phosphorylated FFAT motif), RMDN3 (via phosphorylated FFAT motif), OSBPL1A (via FFAT motif), KCNB1 (via phosphorylated FFAT motif) and KCNB2 (via phosphorylated FFAT motif). Interacts (via MSP domain) with WDR44 (via FFAT motif); the interactions connect the endoplasmic reticulum (ER) with the endosomal tubule.

It localises to the endoplasmic reticulum membrane. Endoplasmic reticulum (ER)-anchored protein that mediates the formation of contact sites between the ER and endosomes via interaction with FFAT motif-containing proteins such as STARD3 or WDR44. Interacts with STARD3 in a FFAT motif phosphorylation dependent manner. Via interaction with WDR44 participates in neosynthesized protein export. Participates in the endoplasmic reticulum unfolded protein response (UPR) by inducing ERN1/IRE1 activity. Involved in cellular calcium homeostasis regulation. The sequence is that of Vesicle-associated membrane protein-associated protein B from Mus musculus (Mouse).